Consider the following 875-residue polypeptide: GATOR2 complex protein MIOS (875 aa).

WD repeat units follow at residues 58 to 100 (SDTP…NSKF), 111 to 155 (KHAR…TPDI), 182 to 221 (GQNDASLSLCWLPRDQKLLLAGMHRNLAIFDLRNTSQKMF), 223 to 261 (NTKAVQGVTVDPYFHDRVASFYEGQVAIWDLRKFEKPVL), 265 to 306 (EQPK…TPIG), 320 to 360 (PCDN…SLAW), and 395 to 437 (RLRA…KQYT). The C4-type zinc finger occupies 735–781 (VSCNFCGKSISYSCSSVPHQGRGFSQYGVSGSPTKSKVTSCPGCRKP). Cysteine 737 and cysteine 740 together coordinate Zn(2+). Phosphoserine is present on residues serine 759 and serine 766. Zn(2+) contacts are provided by cysteine 775, cysteine 778, cysteine 788, cysteine 827, cysteine 830, histidine 832, histidine 835, histidine 838, cysteine 849, cysteine 854, and cysteine 858. An RING-type; atypical zinc finger spans residues 782–863 (LPRCALCLIN…CTCKCMQLDT (82 aa)).

Belongs to the WD repeat mio family. As to quaternary structure, component of the GATOR2 subcomplex, composed of MIOS, SEC13, SEH1L, WDR24 and WDR59. The GATOR2 complex interacts with CASTOR1 and CASTOR2; the interaction is negatively regulated by arginine. CASTOR1 and CASTOR2 convey leucine availability via direct interaction with MIOS. The GATOR2 complex interacts with SESN1, SESN2 and SESN3; the interaction is negatively regulated by amino acids. Interacts with SAR1A and SAR1B; the interaction is direct, disrupted by leucine and mediates the interaction of SAR1A or SAR1B with the GATOR2 complex to negatively regulate the TORC1 signaling upon leucine deprivation. In terms of tissue distribution, widely expressed. In brain, expressed in neurons and glia (oligodendrocytes and astrocytes), with more abundance in neurons.

It is found in the lysosome membrane. Its activity is regulated as follows. The GATOR2 complex is negatively regulated by the upstream amino acid sensors CASTOR1 and SESN2, which sequester the GATOR2 complex in absence of amino acids. In the presence of abundant amino acids, GATOR2 is released from CASTOR1 and SESN2 and activated. Functionally, as a component of the GATOR2 complex, functions as an activator of the amino acid-sensing branch of the mTORC1 signaling pathway. The GATOR2 complex indirectly activates mTORC1 through the inhibition of the GATOR1 subcomplex. GATOR2 probably acts as an E3 ubiquitin-protein ligase toward GATOR1. In the presence of abundant amino acids, the GATOR2 complex mediates ubiquitination of the NPRL2 core component of the GATOR1 complex, leading to GATOR1 inactivation. In the absence of amino acids, GATOR2 is inhibited, activating the GATOR1 complex. Within the GATOR2 complex, MIOS is required to prevent autoubiquitination of WDR24, the catalytic subunit of the complex. The GATOR2 complex is required for brain myelination. In Mus musculus (Mouse), this protein is GATOR2 complex protein MIOS.